The primary structure comprises 109 residues: uncharacterized protein (109 aa).

The protein resides in the mitochondrion. This is an uncharacterized protein from Marchantia polymorpha (Common liverwort).